The primary structure comprises 201 residues: MEWVWALVLLAALGSAQAERDCRVSSFRVKENFDKARFSGTWYAMAKKDPEGLFLQDNIVAEFSVDENGHMSATAKGRVRLLNNWDVCADMVGTFTDTEDPAKFKMKYWGVASFLQKGNDDHWIIDTDYDTYAVQYSCRLQNLDGTCADSYSFVFARDPHGFSPEVQKIVRQRQEELCLARQYRIITHNGYCDGKSERNIL.

The signal sequence occupies residues 1–18; it reads MEWVWALVLLAALGSAQA. 3 disulfide bridges follow: Cys22-Cys178, Cys88-Cys192, and Cys138-Cys147. Gln116 is a substrate binding site. Residue Arg139 is modified to Omega-N-methylarginine.

It belongs to the calycin superfamily. Lipocalin family. As to quaternary structure, interacts with TTR. Interaction with TTR prevents its loss by filtration through the kidney glomeruli. Interacts with STRA6.

The protein resides in the secreted. In terms of biological role, retinol-binding protein that mediates retinol transport in blood plasma. Delivers retinol from the liver stores to the peripheral tissues. Transfers the bound all-trans retinol to STRA6, that then facilitates retinol transport across the cell membrane. The polypeptide is Retinol-binding protein 4 (RBP4) (Sus scrofa (Pig)).